Here is a 492-residue protein sequence, read N- to C-terminus: G2/mitotic-specific cyclin CLB2 (492 aa).

The tract at residues 1 to 176 is disordered; the sequence is MPQVTKTNNE…QPEVGERSQS (176 aa). Polar residues predominate over residues 23–33; the sequence is QESISTIKNTT. Over residues 34–58 the composition is skewed to low complexity; it reads ISNSQHKQQTQQQISSPPQVSVTSS. Polar residues predominate over residues 59–83; that stretch reads EGVSHVNTRQYLGDVSNQYITNAKP. A compositionally biased stretch (low complexity) spans 111-135; the sequence is ASDNNNNGSTSSSSNSSNNNNNDAN. The region spanning 208 to 334 is the Cyclin N-terminal domain; sequence EIFSYYYELE…MLTILNFDLN (127 aa).

This sequence belongs to the cyclin family. Cyclin AB subfamily.

2/mitotic-specific cyclin essential for the control of the cell cycle at the G2/M (mitosis) transition. G2/M cyclins accumulate steadily during G2 and are abruptly destroyed at mitosis. Degradation is necessary for the cell to exit from mitosis. Plays a role in morphogenesis by negatively regulating polarized growth. Through binding to CDC28 regulates cytokinesis, partly by phosphorylation of the actomyosin ring component IQG1. Also involved in the phosphorylation of CDC6 and CDC54. The sequence is that of G2/mitotic-specific cyclin CLB2 (CLB2) from Candida albicans (strain SC5314 / ATCC MYA-2876) (Yeast).